Reading from the N-terminus, the 131-residue chain is Probable lactoylglutathione lyase (131 aa).

Residues 2–126 enclose the VOC domain; it reads FLLHTMIRVG…DGYKIELIQT (125 aa). His5 contacts Ni(2+). Residue Arg9 participates in substrate binding. Glu56 is a Ni(2+) binding site. Substrate contacts are provided by Asn60 and His74. His74 and Glu122 together coordinate Ni(2+). Glu122 acts as the Proton donor/acceptor in catalysis.

The protein belongs to the glyoxalase I family. The cofactor is Ni(2+).

It carries out the reaction (R)-S-lactoylglutathione = methylglyoxal + glutathione. The protein operates within secondary metabolite metabolism; methylglyoxal degradation; (R)-lactate from methylglyoxal: step 1/2. Its function is as follows. Catalyzes the conversion of hemimercaptal, formed from methylglyoxal and glutathione, to S-lactoylglutathione. The chain is Probable lactoylglutathione lyase (gloA) from Synechocystis sp. (strain ATCC 27184 / PCC 6803 / Kazusa).